A 144-amino-acid chain; its full sequence is Large ribosomal subunit protein uL13 (144 aa).

It belongs to the universal ribosomal protein uL13 family. Part of the 50S ribosomal subunit.

In terms of biological role, this protein is one of the early assembly proteins of the 50S ribosomal subunit, although it is not seen to bind rRNA by itself. It is important during the early stages of 50S assembly. This is Large ribosomal subunit protein uL13 from Natronomonas pharaonis (strain ATCC 35678 / DSM 2160 / CIP 103997 / JCM 8858 / NBRC 14720 / NCIMB 2260 / Gabara) (Halobacterium pharaonis).